Consider the following 210-residue polypeptide: Probable nicotinate-nucleotide adenylyltransferase (210 aa).

It belongs to the NadD family.

It carries out the reaction nicotinate beta-D-ribonucleotide + ATP + H(+) = deamido-NAD(+) + diphosphate. The protein operates within cofactor biosynthesis; NAD(+) biosynthesis; deamido-NAD(+) from nicotinate D-ribonucleotide: step 1/1. Functionally, catalyzes the reversible adenylation of nicotinate mononucleotide (NaMN) to nicotinic acid adenine dinucleotide (NaAD). The chain is Probable nicotinate-nucleotide adenylyltransferase from Streptococcus pyogenes serotype M18 (strain MGAS8232).